A 64-amino-acid chain; its full sequence is Large ribosomal subunit protein uL30 (64 aa).

A disordered region spans residues 1 to 22 (MAKAAKTIKVEQTGSAIRRHHS).

This sequence belongs to the universal ribosomal protein uL30 family. Part of the 50S ribosomal subunit.

This Nitrobacter winogradskyi (strain ATCC 25391 / DSM 10237 / CIP 104748 / NCIMB 11846 / Nb-255) protein is Large ribosomal subunit protein uL30.